The sequence spans 336 residues: Flap endonuclease 1 (336 aa).

Residues 1–98 are N-domain; sequence MGVDLGDILS…GTLAARAQMK (98 aa). Mg(2+) contacts are provided by D27, D80, E150, E152, D171, D173, and D234. The tract at residues 114–255 is I-domain; that stretch reads DSFRYAQATA…RALKLIREHG (142 aa). The segment at 328 to 336 is interaction with PCNA; it reads GQSTLERWL.

It belongs to the XPG/RAD2 endonuclease family. FEN1 subfamily. As to quaternary structure, interacts with PCNA. PCNA stimulates the nuclease activity without altering cleavage specificity. Requires Mg(2+) as cofactor.

Structure-specific nuclease with 5'-flap endonuclease and 5'-3' exonuclease activities involved in DNA replication and repair. During DNA replication, cleaves the 5'-overhanging flap structure that is generated by displacement synthesis when DNA polymerase encounters the 5'-end of a downstream Okazaki fragment. Binds the unpaired 3'-DNA end and kinks the DNA to facilitate 5' cleavage specificity. Cleaves one nucleotide into the double-stranded DNA from the junction in flap DNA, leaving a nick for ligation. Also involved in the base excision repair (BER) pathway. Acts as a genome stabilization factor that prevents flaps from equilibrating into structures that lead to duplications and deletions. Also possesses 5'-3' exonuclease activity on nicked or gapped double-stranded DNA. In Methanothrix thermoacetophila (strain DSM 6194 / JCM 14653 / NBRC 101360 / PT) (Methanosaeta thermophila), this protein is Flap endonuclease 1.